The primary structure comprises 864 residues: Translation initiation factor IF-2 (864 aa).

Residues aspartate 140–asparagine 171 are compositionally biased toward basic and acidic residues. Residues aspartate 140–lysine 179 are disordered. One can recognise a tr-type G domain in the interval isoleucine 364–lysine 533. A G1 region spans residues glycine 373–threonine 380. Glycine 373 to threonine 380 contacts GTP. Positions glycine 398 to asparagine 402 are G2. The interval aspartate 419–glycine 422 is G3. Residues aspartate 419–histidine 423 and asparagine 473–aspartate 476 each bind GTP. The G4 stretch occupies residues asparagine 473–aspartate 476. The tract at residues serine 509–lysine 511 is G5.

The protein belongs to the TRAFAC class translation factor GTPase superfamily. Classic translation factor GTPase family. IF-2 subfamily.

The protein resides in the cytoplasm. Functionally, one of the essential components for the initiation of protein synthesis. Protects formylmethionyl-tRNA from spontaneous hydrolysis and promotes its binding to the 30S ribosomal subunits. Also involved in the hydrolysis of GTP during the formation of the 70S ribosomal complex. The chain is Translation initiation factor IF-2 from Buchnera aphidicola subsp. Acyrthosiphon pisum (strain 5A).